A 529-amino-acid chain; its full sequence is T-complex protein 1 subunit beta (529 aa).

This sequence belongs to the TCP-1 chaperonin family. In terms of assembly, heterooligomeric complex of about 850 to 900 kDa that forms two stacked rings, 12 to 16 nm in diameter.

It localises to the cytoplasm. Its function is as follows. Molecular chaperone; assists the folding of proteins upon ATP hydrolysis. Known to play a role, in vitro, in the folding of actin and tubulin. In Caenorhabditis elegans, this protein is T-complex protein 1 subunit beta (cct-2).